Reading from the N-terminus, the 111-residue chain is Cytochrome c oxidase subunit 6A1, mitochondrial (111 aa).

A mitochondrion-targeting transit peptide spans Met1–Met26. Topologically, residues Ser27–Ser36 are mitochondrial matrix. The helical transmembrane segment at Ala37 to Leu61 threads the bilayer. Residues Lys62 to Glu111 lie on the Mitochondrial intermembrane side of the membrane.

This sequence belongs to the cytochrome c oxidase subunit 6A family. Component of the cytochrome c oxidase (complex IV, CIV), a multisubunit enzyme composed of 14 subunits. The complex is composed of a catalytic core of 3 subunits MT-CO1, MT-CO2 and MT-CO3, encoded in the mitochondrial DNA, and 11 supernumerary subunits COX4I, COX5A, COX5B, COX6A, COX6B, COX6C, COX7A, COX7B, COX7C, COX8 and NDUFA4, which are encoded in the nuclear genome. The complex exists as a monomer or a dimer and forms supercomplexes (SCs) in the inner mitochondrial membrane with NADH-ubiquinone oxidoreductase (complex I, CI) and ubiquinol-cytochrome c oxidoreductase (cytochrome b-c1 complex, complex III, CIII), resulting in different assemblies (supercomplex SCI(1)III(2)IV(1) and megacomplex MCI(2)III(2)IV(2)).

The protein localises to the mitochondrion inner membrane. It participates in energy metabolism; oxidative phosphorylation. Its function is as follows. Component of the cytochrome c oxidase, the last enzyme in the mitochondrial electron transport chain which drives oxidative phosphorylation. The respiratory chain contains 3 multisubunit complexes succinate dehydrogenase (complex II, CII), ubiquinol-cytochrome c oxidoreductase (cytochrome b-c1 complex, complex III, CIII) and cytochrome c oxidase (complex IV, CIV), that cooperate to transfer electrons derived from NADH and succinate to molecular oxygen, creating an electrochemical gradient over the inner membrane that drives transmembrane transport and the ATP synthase. Cytochrome c oxidase is the component of the respiratory chain that catalyzes the reduction of oxygen to water. Electrons originating from reduced cytochrome c in the intermembrane space (IMS) are transferred via the dinuclear copper A center (CU(A)) of subunit 2 and heme A of subunit 1 to the active site in subunit 1, a binuclear center (BNC) formed by heme A3 and copper B (CU(B)). The BNC reduces molecular oxygen to 2 water molecules unsing 4 electrons from cytochrome c in the IMS and 4 protons from the mitochondrial matrix. This is Cytochrome c oxidase subunit 6A1, mitochondrial (Cox6a1) from Mus musculus (Mouse).